Here is a 142-residue protein sequence, read N- to C-terminus: Hemoglobin subunit alpha-A (142 aa).

The 141-residue stretch at 2–142 (VLSGSDKTNV…VGNVLTAKYR (141 aa)) folds into the Globin domain. O2 is bound at residue His-59. His-88 contributes to the heme b binding site.

This sequence belongs to the globin family. Heterotetramer of two alpha chains and two beta chains. Red blood cells.

Involved in oxygen transport from the lung to the various peripheral tissues. This Ara ararauna (Blue-and-yellow macaw) protein is Hemoglobin subunit alpha-A (HBAA).